The sequence spans 417 residues: RH-like protein IIF (417 aa).

Helical transmembrane passes span 12–32 (CLPL…YFFT), 44–64 (LVAS…GFGF), 77–97 (VAFN…LDGF), 125–145 (ISAG…MVLV), 172–192 (FYLF…KPLP), 203–223 (TIPS…WPSF), 238–258 (VFNT…GSSL), 265–285 (ISMT…GTSC), 287–307 (LIPS…ISIG), 331–351 (NFSL…VRHT), and 358–378 (MIGF…AIAL).

It belongs to the ammonium transporter (TC 2.A.49) family. Rh subfamily.

The protein resides in the membrane. Functionally, may be part of an oligomeric complex which is likely to have a transport or channel function in the erythrocyte membrane. The protein is RH-like protein IIF of Pan troglodytes (Chimpanzee).